The primary structure comprises 173 residues: Pectinesterase inhibitor 2 (173 aa).

Residues 1 to 25 (MAAYLTNRVLMSSLMFFVMTGSLNA) form the signal peptide. Cys34 and Cys43 form a disulfide bridge. 2 N-linked (GlcNAc...) asparagine glycosylation sites follow: Asn39 and Asn63. Residues Cys99 and Cys139 are joined by a disulfide bond.

Belongs to the PMEI family. Interacts with PPME1. As to expression, highest expression in flowers. Expressed exclusively at the pollen tube tip.

The protein resides in the secreted. It localises to the extracellular space. Its subcellular location is the apoplast. Its function is as follows. Inhibits pectin methylesterase (PME) from flowers, siliques and pollen tube. In Arabidopsis thaliana (Mouse-ear cress), this protein is Pectinesterase inhibitor 2.